A 108-amino-acid chain; its full sequence is Peptidyl-prolyl cis-trans isomerase FKBP1A (108 aa).

The PPIase FKBP-type domain maps to 20 to 108 (GQTCVVHYTG…VFDVELLKLE (89 aa)). Lys-53 is subject to N6-acetyllysine; alternate. At Lys-53 the chain carries N6-succinyllysine; alternate.

It belongs to the FKBP-type PPIase family. FKBP1 subfamily. As to quaternary structure, interacts with TGFBR1; prevents TGFBR1 phosphorylation by TGFBR2 and stabilizes it in the inactive conformation. Interacts with ACVR1B and SMAD7. Identified in a complex composed of RYR1, PDE4D, PKA, FKBP1A and protein phosphatase 1 (PP1). Interacts directly with RYR2 and RYR3. Interacts directly with RYR1. Interacts with GLMN; rapamycin and FK506 abolish the interaction with GLMN in a dose dependent manner.

Its subcellular location is the cytoplasm. The protein resides in the cytosol. The protein localises to the sarcoplasmic reticulum membrane. The catalysed reaction is [protein]-peptidylproline (omega=180) = [protein]-peptidylproline (omega=0). With respect to regulation, inhibited by both FK506 and rapamycin. Its function is as follows. Keeps in an inactive conformation TGFBR1, the TGF-beta type I serine/threonine kinase receptor, preventing TGF-beta receptor activation in absence of ligand. Recruits SMAD7 to ACVR1B which prevents the association of SMAD2 and SMAD3 with the activin receptor complex, thereby blocking the activin signal. May modulate the RYR1 calcium channel activity. PPIases accelerate the folding of proteins. It catalyzes the cis-trans isomerization of proline imidic peptide bonds in oligopeptides. The chain is Peptidyl-prolyl cis-trans isomerase FKBP1A (Fkbp1a) from Mus musculus (Mouse).